The chain runs to 264 residues: Hydroxyethylthiazole kinase (264 aa).

Residue methionine 43 participates in substrate binding. Residues arginine 119 and threonine 165 each contribute to the ATP site. Glycine 192 contacts substrate.

This sequence belongs to the Thz kinase family. Mg(2+) serves as cofactor.

The enzyme catalyses 5-(2-hydroxyethyl)-4-methylthiazole + ATP = 4-methyl-5-(2-phosphooxyethyl)-thiazole + ADP + H(+). It participates in cofactor biosynthesis; thiamine diphosphate biosynthesis; 4-methyl-5-(2-phosphoethyl)-thiazole from 5-(2-hydroxyethyl)-4-methylthiazole: step 1/1. Its function is as follows. Catalyzes the phosphorylation of the hydroxyl group of 4-methyl-5-beta-hydroxyethylthiazole (THZ). In Anoxybacillus flavithermus (strain DSM 21510 / WK1), this protein is Hydroxyethylthiazole kinase.